The primary structure comprises 316 residues: 33 kDa chaperonin (316 aa).

Cystine bridges form between cysteine 239-cysteine 241 and cysteine 272-cysteine 275.

Belongs to the HSP33 family. Post-translationally, under oxidizing conditions two disulfide bonds are formed involving the reactive cysteines. Under reducing conditions zinc is bound to the reactive cysteines and the protein is inactive.

Its subcellular location is the cytoplasm. Redox regulated molecular chaperone. Protects both thermally unfolding and oxidatively damaged proteins from irreversible aggregation. Plays an important role in the bacterial defense system toward oxidative stress. The polypeptide is 33 kDa chaperonin (Clostridium perfringens (strain SM101 / Type A)).